The primary structure comprises 661 residues: Hemocyanin C chain (661 aa).

C3 and C557 are oxidised to a cystine. 6 residues coordinate Cu cation: H200, H204, H230, H350, H354, and H390. A glycan (N-linked (GlcNAc...) asparagine) is linked at N476.

Belongs to the tyrosinase family. Hemocyanin subfamily. In terms of assembly, hexamer of a number of different chains, of which A, B, and C have been identified. Hemolymph.

It localises to the secreted. The protein resides in the extracellular space. Its function is as follows. Hemocyanins are copper-containing oxygen carriers occurring freely dissolved in the hemolymph of many mollusks and arthropods. In Panulirus interruptus (California spiny lobster), this protein is Hemocyanin C chain.